A 685-amino-acid chain; its full sequence is Polyphosphate kinase (685 aa).

Position 45 (Asn-45) interacts with ATP. Residues Arg-372 and Arg-402 each contribute to the Mg(2+) site. Positions 427–461 (PGLKIHAKLFLISRKEGDDVVRYAHIGTGNFNEKT) constitute a PLD phosphodiesterase 1 domain. His-432 functions as the Phosphohistidine intermediate in the catalytic mechanism. The ATP site is built by Tyr-465, Arg-561, and His-589. In terms of domain architecture, PLD phosphodiesterase 2 spans 584-614 (DRYLEHDRIYIFDNAGDKQVYLSSADWMTRN).

It belongs to the polyphosphate kinase 1 (PPK1) family. It depends on Mg(2+) as a cofactor. In terms of processing, an intermediate of this reaction is the autophosphorylated ppk in which a phosphate is covalently linked to a histidine residue through a N-P bond.

It carries out the reaction [phosphate](n) + ATP = [phosphate](n+1) + ADP. Catalyzes the reversible transfer of the terminal phosphate of ATP to form a long-chain polyphosphate (polyP). This is Polyphosphate kinase from Klebsiella pneumoniae.